Here is a 227-residue protein sequence, read N- to C-terminus: Large ribosomal subunit protein uL3 (227 aa).

At Gln151 the chain carries N5-methylglutamine.

Belongs to the universal ribosomal protein uL3 family. In terms of assembly, part of the 50S ribosomal subunit. Forms a cluster with proteins L14 and L19. Post-translationally, methylated by PrmB.

In terms of biological role, one of the primary rRNA binding proteins, it binds directly near the 3'-end of the 23S rRNA, where it nucleates assembly of the 50S subunit. The protein is Large ribosomal subunit protein uL3 of Gluconobacter oxydans (strain 621H) (Gluconobacter suboxydans).